The following is a 570-amino-acid chain: Probable electron transfer flavoprotein-ubiquinone oxidoreductase (570 aa).

13 to 27 serves as a coordination point for FAD; the sequence is VVIVGAGPAGLSAAI. [4Fe-4S] cluster contacts are provided by Cys-515, Cys-539, Cys-542, and Cys-545. In terms of domain architecture, 4Fe-4S ferredoxin-type spans 530-559; it reads KRFQINAANCVHCKTCDIKDPSQNITWVTP.

[4Fe-4S] cluster serves as cofactor. The cofactor is FAD.

It catalyses the reaction a ubiquinone + reduced [electron-transfer flavoprotein] = a ubiquinol + oxidized [electron-transfer flavoprotein] + H(+). Its function is as follows. Accepts electrons from ETF and reduces ubiquinone. The polypeptide is Probable electron transfer flavoprotein-ubiquinone oxidoreductase (etfD) (Acinetobacter baylyi (strain ATCC 33305 / BD413 / ADP1)).